The following is a 193-amino-acid chain: Holliday junction branch migration complex subunit RuvA (193 aa).

Residues 1-64 (MIGRIAGTLL…EDAHLLYGFL (64 aa)) form a domain I region. Positions 65–139 (TPQERSTFRE…GKLGADLGPL (75 aa)) are domain II. A flexible linker region spans residues 139–143 (LAGAA). A domain III region spans residues 144-193 (SPSDHAADILNALLALGYSEKEALAAIKNVPAGTGVSEGIKLSLKALSKA).

It belongs to the RuvA family. As to quaternary structure, homotetramer. Forms an RuvA(8)-RuvB(12)-Holliday junction (HJ) complex. HJ DNA is sandwiched between 2 RuvA tetramers; dsDNA enters through RuvA and exits via RuvB. An RuvB hexamer assembles on each DNA strand where it exits the tetramer. Each RuvB hexamer is contacted by two RuvA subunits (via domain III) on 2 adjacent RuvB subunits; this complex drives branch migration. In the full resolvosome a probable DNA-RuvA(4)-RuvB(12)-RuvC(2) complex forms which resolves the HJ.

It localises to the cytoplasm. In terms of biological role, the RuvA-RuvB-RuvC complex processes Holliday junction (HJ) DNA during genetic recombination and DNA repair, while the RuvA-RuvB complex plays an important role in the rescue of blocked DNA replication forks via replication fork reversal (RFR). RuvA specifically binds to HJ cruciform DNA, conferring on it an open structure. The RuvB hexamer acts as an ATP-dependent pump, pulling dsDNA into and through the RuvAB complex. HJ branch migration allows RuvC to scan DNA until it finds its consensus sequence, where it cleaves and resolves the cruciform DNA. This Burkholderia thailandensis (strain ATCC 700388 / DSM 13276 / CCUG 48851 / CIP 106301 / E264) protein is Holliday junction branch migration complex subunit RuvA.